Here is a 209-residue protein sequence, read N- to C-terminus: ATP synthase subunit b 2 (209 aa).

A helical transmembrane segment spans residues 9 to 29 (WWGWVTLSVLVMVAGDGTLAF).

The protein belongs to the ATPase B chain family. F-type ATPases have 2 components, F(1) - the catalytic core - and F(0) - the membrane proton channel. F(1) has five subunits: alpha(3), beta(3), gamma(1), delta(1), epsilon(1). F(0) has three main subunits: a(1), b(2) and c(10-14). The alpha and beta chains form an alternating ring which encloses part of the gamma chain. F(1) is attached to F(0) by a central stalk formed by the gamma and epsilon chains, while a peripheral stalk is formed by the delta and b chains.

The protein resides in the cell inner membrane. Its function is as follows. F(1)F(0) ATP synthase produces ATP from ADP in the presence of a proton or sodium gradient. F-type ATPases consist of two structural domains, F(1) containing the extramembraneous catalytic core and F(0) containing the membrane proton channel, linked together by a central stalk and a peripheral stalk. During catalysis, ATP synthesis in the catalytic domain of F(1) is coupled via a rotary mechanism of the central stalk subunits to proton translocation. Component of the F(0) channel, it forms part of the peripheral stalk, linking F(1) to F(0). The chain is ATP synthase subunit b 2 from Desulfosudis oleivorans (strain DSM 6200 / JCM 39069 / Hxd3) (Desulfococcus oleovorans).